Reading from the N-terminus, the 314-residue chain is Serine/threonine-protein phosphatase PP-Y (314 aa).

Mn(2+) is bound by residues D60, H62, D88, and N120. The Proton donor role is filled by H121. Residues H169 and H244 each coordinate Mn(2+).

This sequence belongs to the PPP phosphatase family. PP-Y subfamily. The cofactor is Mn(2+).

It catalyses the reaction O-phospho-L-seryl-[protein] + H2O = L-seryl-[protein] + phosphate. It carries out the reaction O-phospho-L-threonyl-[protein] + H2O = L-threonyl-[protein] + phosphate. In Drosophila melanogaster (Fruit fly), this protein is Serine/threonine-protein phosphatase PP-Y (PpY-55A).